Consider the following 121-residue polypeptide: NAD(P)H-quinone oxidoreductase subunit M (121 aa).

The protein belongs to the complex I NdhM subunit family. In terms of assembly, NDH-1 can be composed of about 15 different subunits; different subcomplexes with different compositions have been identified which probably have different functions.

The protein resides in the cellular thylakoid membrane. It catalyses the reaction a plastoquinone + NADH + (n+1) H(+)(in) = a plastoquinol + NAD(+) + n H(+)(out). The enzyme catalyses a plastoquinone + NADPH + (n+1) H(+)(in) = a plastoquinol + NADP(+) + n H(+)(out). In terms of biological role, NDH-1 shuttles electrons from an unknown electron donor, via FMN and iron-sulfur (Fe-S) centers, to quinones in the respiratory and/or the photosynthetic chain. The immediate electron acceptor for the enzyme in this species is believed to be plastoquinone. Couples the redox reaction to proton translocation, and thus conserves the redox energy in a proton gradient. Cyanobacterial NDH-1 also plays a role in inorganic carbon-concentration. This Nostoc punctiforme (strain ATCC 29133 / PCC 73102) protein is NAD(P)H-quinone oxidoreductase subunit M.